The following is a 156-amino-acid chain: Small ribosomal subunit protein uS7 (156 aa).

It belongs to the universal ribosomal protein uS7 family. Part of the 30S ribosomal subunit. Contacts proteins S9 and S11.

In terms of biological role, one of the primary rRNA binding proteins, it binds directly to 16S rRNA where it nucleates assembly of the head domain of the 30S subunit. Is located at the subunit interface close to the decoding center, probably blocks exit of the E-site tRNA. The protein is Small ribosomal subunit protein uS7 of Herminiimonas arsenicoxydans.